A 466-amino-acid polypeptide reads, in one-letter code: 23S rRNA (uracil(1939)-C(5))-methyltransferase RlmD (466 aa).

Residues 1–22 (MSSQPNPTSHPEAASAASAASN) form a disordered region. The region spanning 17–81 (ASAASNDPVV…PSYEQAHLVE (65 aa)) is the TRAM domain. Residues Cys-94, Cys-100, Cys-103, and Cys-182 each contribute to the [4Fe-4S] cluster site. S-adenosyl-L-methionine-binding residues include Gln-290, Phe-319, Asn-324, Glu-340, Asn-368, and Asp-389. Cys-422 (nucleophile) is an active-site residue.

The protein belongs to the class I-like SAM-binding methyltransferase superfamily. RNA M5U methyltransferase family. RlmD subfamily.

It carries out the reaction uridine(1939) in 23S rRNA + S-adenosyl-L-methionine = 5-methyluridine(1939) in 23S rRNA + S-adenosyl-L-homocysteine + H(+). Functionally, catalyzes the formation of 5-methyl-uridine at position 1939 (m5U1939) in 23S rRNA. In Cupriavidus metallidurans (strain ATCC 43123 / DSM 2839 / NBRC 102507 / CH34) (Ralstonia metallidurans), this protein is 23S rRNA (uracil(1939)-C(5))-methyltransferase RlmD.